The primary structure comprises 441 residues: MSVSDELFAEALKVMPGGVSSPVRAYRSVGGTPRFVKRALGSHIVDVDDKRYVDLVCSWGPMIAGHAHPEVVAAVLQAVADSTSFGAPSEVELRLAQAVVARMGGAIDKVRFTCSGTEAVMTAARLARGITKRPLLVKFVGCYHGHSDSFLVSAGSGVASLGLPDSPGVPKEVAGDTVALPYGRIDMVEELFAERGDQVAAIVTEGVPANMGVIVPPEGFNRRLHDIAHAHGALLIQDEVLTGFRLSPTGAWGLQGAKEGWTPDLFTFGKVIGGGMPLAAVGGSAQLMDYLAPEGPVYQAGTLSGNPAACAAGLATLALMDDAAYSRLDATADRVSAMADAALESAGVPHRINKVSNLFSVFLTDAPVTDFASASKQDTKAFSRFFHAALDAGLWLAPSGFEAWFCSTALDDDDLEVIDAGLHKAAQAAAQGLSSLEDVRR.

Lys270 carries the N6-(pyridoxal phosphate)lysine modification.

This sequence belongs to the class-III pyridoxal-phosphate-dependent aminotransferase family. HemL subfamily. In terms of assembly, homodimer. Pyridoxal 5'-phosphate serves as cofactor.

It is found in the cytoplasm. It carries out the reaction (S)-4-amino-5-oxopentanoate = 5-aminolevulinate. Its pathway is porphyrin-containing compound metabolism; protoporphyrin-IX biosynthesis; 5-aminolevulinate from L-glutamyl-tRNA(Glu): step 2/2. This Propionibacterium freudenreichii subsp. freudenreichii protein is Glutamate-1-semialdehyde 2,1-aminomutase (hemL).